The chain runs to 820 residues: Phenylalanine--tRNA ligase beta subunit (820 aa).

The tRNA-binding domain maps to 39–150; it reads PAPVGGVLLV…GTAAPGTPLR (112 aa). In terms of domain architecture, B5 spans 435–510; it reads EVPQTITTTG…RLHGFTELPE (76 aa). Positions 488, 494, 497, and 498 each coordinate Mg(2+). Residues 727-818 form the FDX-ACB domain; the sequence is SRAPAAWRDL…AVKARGWAIR (92 aa).

This sequence belongs to the phenylalanyl-tRNA synthetase beta subunit family. Type 1 subfamily. As to quaternary structure, tetramer of two alpha and two beta subunits. Mg(2+) serves as cofactor.

It is found in the cytoplasm. It carries out the reaction tRNA(Phe) + L-phenylalanine + ATP = L-phenylalanyl-tRNA(Phe) + AMP + diphosphate + H(+). The chain is Phenylalanine--tRNA ligase beta subunit (pheT) from Deinococcus radiodurans (strain ATCC 13939 / DSM 20539 / JCM 16871 / CCUG 27074 / LMG 4051 / NBRC 15346 / NCIMB 9279 / VKM B-1422 / R1).